A 78-amino-acid chain; its full sequence is Sec-independent protein translocase protein TatA (78 aa).

The chain crosses the membrane as a helical span at residues 1–21; it reads MGMPSMPELLIILLIVVLLFG. Residues 46–78 form a disordered region; the sequence is DEEEVATENKKEIEEKTTASTTKTTADQDTTKA. A compositionally biased stretch (basic and acidic residues) spans 52-62; it reads TENKKEIEEKT. Low complexity predominate over residues 63–78; sequence TASTTKTTADQDTTKA.

It belongs to the TatA/E family. In terms of assembly, the Tat system comprises two distinct complexes: a TatABC complex, containing multiple copies of TatA, TatB and TatC subunits, and a separate TatA complex, containing only TatA subunits. Substrates initially bind to the TatABC complex, which probably triggers association of the separate TatA complex to form the active translocon.

The protein localises to the cell inner membrane. In terms of biological role, part of the twin-arginine translocation (Tat) system that transports large folded proteins containing a characteristic twin-arginine motif in their signal peptide across membranes. TatA could form the protein-conducting channel of the Tat system. This is Sec-independent protein translocase protein TatA from Nitratiruptor sp. (strain SB155-2).